The chain runs to 197 residues: Dephospho-CoA kinase (197 aa).

Positions 3–197 constitute a DPCK domain; sequence VYGLTGGIGS…QSLLHTHQNT (195 aa). Position 11–16 (11–16) interacts with ATP; it reads GSGKTT.

It belongs to the CoaE family.

Its subcellular location is the cytoplasm. The enzyme catalyses 3'-dephospho-CoA + ATP = ADP + CoA + H(+). The protein operates within cofactor biosynthesis; coenzyme A biosynthesis; CoA from (R)-pantothenate: step 5/5. Catalyzes the phosphorylation of the 3'-hydroxyl group of dephosphocoenzyme A to form coenzyme A. The polypeptide is Dephospho-CoA kinase (Hydrogenovibrio crunogenus (strain DSM 25203 / XCL-2) (Thiomicrospira crunogena)).